A 506-amino-acid polypeptide reads, in one-letter code: uncharacterized protein (506 aa).

The protein to group II intron maturases.

The protein localises to the plastid. It localises to the chloroplast. This is an uncharacterized protein from Euglena gracilis.